Here is a 693-residue protein sequence, read N- to C-terminus: G1/S-specific cyclin CCN1 (693 aa).

Over residues 273–298 (QKKQKKALSSNSSRTTTASYTHQNQS) the composition is skewed to polar residues. Disordered stretches follow at residues 273–320 (QKKQ…EDDD), 465–571 (DEDE…PPGS), 595–615 (SNSSNINIHHGHHNTKQEKRY), and 662–693 (NNTNSSSPLMNQQQQQQVTQSSLYQHHHQYHQ). Acidic residues-rich tracts occupy residues 306–320 (DEDIDLDSGDEEDDD) and 465–476 (DEDENVSTDDEA). Polar residues-rich tracts occupy residues 489–516 (DGNNQLFTPKSPNAFSSNSSLTLNNHPQ) and 524–563 (PSATSQYSLFSNKNNRTHESTSGLNSTCNTPTHISISSFA). Low complexity predominate over residues 666–685 (SSSPLMNQQQQQQVTQSSLY).

This sequence belongs to the cyclin family. In terms of assembly, interacts with CDC28. The CDC28-CCN1 complex associates with septin CDC11 upon hyphal induction.

Its function is as follows. G1/S-specific cyclin essential for the control of the cell cycle at the G1/S (start) transition and for maintenance of filamentous growth. Through binding to CDC28 controls the phosphorylation of CDC11 and SEC2 upon induction of filamentous growth. This Candida albicans (strain SC5314 / ATCC MYA-2876) (Yeast) protein is G1/S-specific cyclin CCN1 (CCN1).